The following is a 206-amino-acid chain: Probable GTP-binding protein EngB (206 aa).

An EngB-type G domain is found at 23–197; sequence QGIEVAFAGR…ERVLDKWFGY (175 aa). Residues 31 to 38, 58 to 62, 76 to 79, 143 to 146, and 176 to 178 each bind GTP; these read GRSNAGKS, GRTQL, DLPG, TKAD, and FSS. Positions 38 and 60 each coordinate Mg(2+).

The protein belongs to the TRAFAC class TrmE-Era-EngA-EngB-Septin-like GTPase superfamily. EngB GTPase family. It depends on Mg(2+) as a cofactor.

In terms of biological role, necessary for normal cell division and for the maintenance of normal septation. The polypeptide is Probable GTP-binding protein EngB (Pseudoalteromonas atlantica (strain T6c / ATCC BAA-1087)).